The primary structure comprises 692 residues: Elongation factor G (692 aa).

The tr-type G domain maps to 8-282 (EKTRNIGIMA…AVLDYLPAPT (275 aa)). GTP contacts are provided by residues 17 to 24 (AHIDAGKT), 81 to 85 (DTPGH), and 135 to 138 (NKMD). Residues Ser-213, Ser-302, Ser-569, and Ser-680 each carry the phosphoserine modification.

This sequence belongs to the TRAFAC class translation factor GTPase superfamily. Classic translation factor GTPase family. EF-G/EF-2 subfamily. In terms of processing, phosphorylated on threonine residue(s). Phosphorylated by PrkC and dephosphorylated by PrpC, in vitro.

The protein localises to the cytoplasm. In terms of biological role, catalyzes the GTP-dependent ribosomal translocation step during translation elongation. During this step, the ribosome changes from the pre-translocational (PRE) to the post-translocational (POST) state as the newly formed A-site-bound peptidyl-tRNA and P-site-bound deacylated tRNA move to the P and E sites, respectively. Catalyzes the coordinated movement of the two tRNA molecules, the mRNA and conformational changes in the ribosome. This Bacillus subtilis (strain 168) protein is Elongation factor G (fusA).